We begin with the raw amino-acid sequence, 350 residues long: Glycerol-1-phosphate dehydrogenase [NAD(P)+] (350 aa).

NAD(+) is bound by residues 94-98 (GKPID) and 116-119 (TVAS). D121 is a substrate binding site. An NAD(+)-binding site is contributed by S125. D168 provides a ligand contact to substrate. Residues D168 and H248 each contribute to the Zn(2+) site. H252 is a substrate binding site. A Zn(2+)-binding site is contributed by H264.

This sequence belongs to the glycerol-1-phosphate dehydrogenase family. It depends on Zn(2+) as a cofactor.

The protein localises to the cytoplasm. It carries out the reaction sn-glycerol 1-phosphate + NAD(+) = dihydroxyacetone phosphate + NADH + H(+). The enzyme catalyses sn-glycerol 1-phosphate + NADP(+) = dihydroxyacetone phosphate + NADPH + H(+). The protein operates within membrane lipid metabolism; glycerophospholipid metabolism. Catalyzes the NAD(P)H-dependent reduction of dihydroxyacetonephosphate (DHAP or glycerone phosphate) to glycerol 1-phosphate (G1P). The G1P thus generated is used as the glycerophosphate backbone of phospholipids in the cellular membranes of Archaea. This is Glycerol-1-phosphate dehydrogenase [NAD(P)+] from Halorubrum lacusprofundi (strain ATCC 49239 / DSM 5036 / JCM 8891 / ACAM 34).